Reading from the N-terminus, the 200-residue chain is Dephospho-CoA kinase (200 aa).

Residues 3–200 (VLGLTGSIGM…LSGKPAAATR (198 aa)) form the DPCK domain. 11-16 (GMGKTT) is a binding site for ATP.

Belongs to the CoaE family.

It localises to the cytoplasm. It catalyses the reaction 3'-dephospho-CoA + ATP = ADP + CoA + H(+). It functions in the pathway cofactor biosynthesis; coenzyme A biosynthesis; CoA from (R)-pantothenate: step 5/5. Its function is as follows. Catalyzes the phosphorylation of the 3'-hydroxyl group of dephosphocoenzyme A to form coenzyme A. The chain is Dephospho-CoA kinase from Brucella melitensis biotype 1 (strain ATCC 23456 / CCUG 17765 / NCTC 10094 / 16M).